A 90-amino-acid polypeptide reads, in one-letter code: U7-theraphotoxin-Hhn1a 7 (90 aa).

Residues 1–19 (MKTAIFTVVLALAVFAVLS) form the signal peptide. Positions 20 to 50 (FGWEANEKALSEGFTELIHEKEAASETEARE) are excised as a propeptide. Intrachain disulfides connect Cys-51-Cys-65, Cys-58-Cys-70, and Cys-64-Cys-81.

This sequence belongs to the neurotoxin 10 (Hwtx-1) family. 13 (Hntx-13) subfamily. In terms of tissue distribution, expressed by the venom gland.

The protein resides in the secreted. Its function is as follows. Ion channel inhibitor. The sequence is that of U7-theraphotoxin-Hhn1a 7 from Cyriopagopus hainanus (Chinese bird spider).